We begin with the raw amino-acid sequence, 156 residues long: Ribonuclease H (156 aa).

In terms of domain architecture, RNase H type-1 spans 2 to 144 (TMKNVQAFTD…CDVLARTQAS (143 aa)). Residues D11, E49, D71, and D136 each coordinate Mg(2+).

This sequence belongs to the RNase H family. Monomer. It depends on Mg(2+) as a cofactor.

It localises to the cytoplasm. It catalyses the reaction Endonucleolytic cleavage to 5'-phosphomonoester.. Functionally, endonuclease that specifically degrades the RNA of RNA-DNA hybrids. The protein is Ribonuclease H of Nitratidesulfovibrio vulgaris (strain DSM 19637 / Miyazaki F) (Desulfovibrio vulgaris).